The sequence spans 208 residues: Probable very-long-chain (3R)-3-hydroxyacyl-CoA dehydratase (208 aa).

Over 1–11 (MSKILKIQYLK) the chain is Cytoplasmic. Residues 12 to 35 (LYNVISCFLWMSVLLRTGLIWGIT) traverse the membrane as a helical segment. Residues 36 to 46 (KDTAVVFHETN) lie on the Lumenal side of the membrane. The helical transmembrane segment at 47–67 (TLVRWVQTLAIAEVFHSIFGL) threads the bilayer. Residues 68–78 (VSSSPLTTIIQ) are Cytoplasmic-facing. A helical transmembrane segment spans residues 79–97 (VASRLYLVWGVCYPFSYVI). At 98–102 (EGSPI) the chain is on the lumenal side. The chain crosses the membrane as a helical span at residues 103-123 (YLSMIIAWSITEIIRYAFYAF). The Cytoplasmic segment spans residues 124-134 (NLNGDIPAFLT). A helical transmembrane segment spans residues 135-157 (WLRYNTFLILYPIGAGSEFLLVL). Catalysis depends on residues Tyr145 and Glu152. The Lumenal segment spans residues 158-171 (KSRIAAQYVWSLNK). The chain crosses the membrane as a helical span at residues 172–192 (LLWPILMSIYPPGLYIMYTHM). Residues 193–208 (LAQRRKISKRAAARRT) are Cytoplasmic-facing.

This sequence belongs to the very long-chain fatty acids dehydratase HACD family.

It is found in the endoplasmic reticulum membrane. It catalyses the reaction a very-long-chain (3R)-3-hydroxyacyl-CoA = a very-long-chain (2E)-enoyl-CoA + H2O. The protein operates within lipid metabolism; fatty acid biosynthesis. Catalyzes the third of the four reactions of the long-chain fatty acids elongation cycle. This endoplasmic reticulum-bound enzymatic process, allows the addition of two carbons to the chain of long- and very long-chain fatty acids/VLCFAs per cycle. This enzyme catalyzes the dehydration of the 3-hydroxyacyl-CoA intermediate into trans-2,3-enoyl-CoA, within each cycle of fatty acid elongation. Thereby, it participates in the production of VLCFAs of different chain lengths that are involved in multiple biological processes as precursors of membrane lipids and lipid mediators. The sequence is that of Probable very-long-chain (3R)-3-hydroxyacyl-CoA dehydratase from Schizosaccharomyces pombe (strain 972 / ATCC 24843) (Fission yeast).